The sequence spans 293 residues: uncharacterized protein (293 aa).

2 disordered regions span residues 1-114 and 268-293; these read MFLR…IPKL and EETA…GRML. Residues serine 34, serine 35, and serine 89 each carry the phosphoserine modification. Basic and acidic residues-rich tracts occupy residues 73–95 and 277–293; these read SSRD…RDKT and GQER…GRML.

This is an uncharacterized protein from Mus musculus (Mouse).